The following is a 372-amino-acid chain: Silphinene synthase peniA (372 aa).

Residues D116, E121, N263, S267, and E271 each coordinate Mg(2+). The short motif at D116–E121 is the DDXXE motif element.

This sequence belongs to the terpene synthase family. It depends on Mg(2+) as a cofactor.

The catalysed reaction is (2E,6E)-farnesyl diphosphate = silphinene + diphosphate. It functions in the pathway secondary metabolite biosynthesis; terpenoid biosynthesis. In terms of biological role, sesquiterpene cyclase; part of the gene cluster that mediates the biosynthesis of penifulvin A, a potent insecticidal sesquiterpene that features a [5.5.5.6]dioxafenestrane ring. Within the pathway, peniA catalyzes the first step and generates the angular triquinane scaffold silphinene via cyclization of the linear farnesyl pyrophosphate (FPP). The cytochrome P450 monooxygenase peniB and the flavin-dependent monooxygenase peniC then catalyze a series of oxidation reactions to transform silphinene into penifulvin A. The chain is Silphinene synthase peniA from Penicillium patulum (Penicillium griseofulvum).